A 206-amino-acid polypeptide reads, in one-letter code: Probable N-acetyltransferase 14 (206 aa).

The N-acetyltransferase domain occupies 6–206 (LSVREMREDE…MLVREFSKDL (201 aa)). The helical transmembrane segment at 57-77 (FILASFALALLLPVFLAVAAV) threads the bilayer.

Belongs to the camello family.

The protein localises to the membrane. Functionally, probable acetyltransferase that binds the 5'-GGACTACAG-3' sequence of coproporphyrinogen oxidase promoter. Able to activate transcription of a reporter construct in vitro. Its function is as follows. Probable acetyltransferase. May act as a transcription factor regulating the expression of coproporphyrinogen oxidase by binding to a promoter regulatory element. The chain is Probable N-acetyltransferase 14 (Nat14) from Mus musculus (Mouse).